The primary structure comprises 138 residues: Thyrotropin subunit beta (138 aa).

Positions 1–20 are cleaved as a signal peptide; the sequence is MTAIFLMSMVFGLACGQTMS. Cystine bridges form between Cys22-Cys72, Cys36-Cys87, Cys39-Cys125, Cys47-Cys103, Cys51-Cys105, and Cys108-Cys115. Asn43 is a glycosylation site (N-linked (GlcNAc...) asparagine). Positions 133-138 are excised as a propeptide; that stretch reads VVEFSI.

It belongs to the glycoprotein hormones subunit beta family. In terms of assembly, heterodimer of a common alpha chain and a unique beta chain which confers biological specificity to thyrotropin, lutropin, follitropin and gonadotropin.

Its subcellular location is the secreted. In terms of biological role, indispensable for the control of thyroid structure and metabolism. The sequence is that of Thyrotropin subunit beta (TSHB) from Equus caballus (Horse).